Here is a 568-residue protein sequence, read N- to C-terminus: Sulfite reductase [NADPH] hemoprotein beta-component (568 aa).

[4Fe-4S] cluster-binding residues include C426, C432, C471, and C475. C475 contributes to the siroheme binding site.

Belongs to the nitrite and sulfite reductase 4Fe-4S domain family. Alpha(8)-beta(8). The alpha component is a flavoprotein, the beta component is a hemoprotein. The cofactor is siroheme. [4Fe-4S] cluster serves as cofactor.

The enzyme catalyses hydrogen sulfide + 3 NADP(+) + 3 H2O = sulfite + 3 NADPH + 4 H(+). It participates in sulfur metabolism; hydrogen sulfide biosynthesis; hydrogen sulfide from sulfite (NADPH route): step 1/1. Functionally, component of the sulfite reductase complex that catalyzes the 6-electron reduction of sulfite to sulfide. This is one of several activities required for the biosynthesis of L-cysteine from sulfate. The chain is Sulfite reductase [NADPH] hemoprotein beta-component from Xylella fastidiosa (strain 9a5c).